A 398-amino-acid polypeptide reads, in one-letter code: Acetate kinase (398 aa).

Asn-7 is a binding site for Mg(2+). Lys-14 contacts ATP. Arg-85 contacts substrate. The active-site Proton donor/acceptor is Asp-142. ATP-binding positions include 202–206 (HLGNG), 277–279 (DMR), and 325–329 (GIGEN). Mg(2+) is bound at residue Glu-379.

It belongs to the acetokinase family. As to quaternary structure, homodimer. Requires Mg(2+) as cofactor. Mn(2+) is required as a cofactor.

It is found in the cytoplasm. It catalyses the reaction acetate + ATP = acetyl phosphate + ADP. It participates in metabolic intermediate biosynthesis; acetyl-CoA biosynthesis; acetyl-CoA from acetate: step 1/2. Its function is as follows. Catalyzes the formation of acetyl phosphate from acetate and ATP. Can also catalyze the reverse reaction. The protein is Acetate kinase of Deinococcus radiodurans (strain ATCC 13939 / DSM 20539 / JCM 16871 / CCUG 27074 / LMG 4051 / NBRC 15346 / NCIMB 9279 / VKM B-1422 / R1).